The primary structure comprises 417 residues: Glucose-1-phosphate adenylyltransferase (417 aa).

Alpha-D-glucose 1-phosphate is bound by residues Tyr98, Gly163, 178 to 179, and Ser197; that span reads EK.

It belongs to the bacterial/plant glucose-1-phosphate adenylyltransferase family. As to quaternary structure, homotetramer.

The enzyme catalyses alpha-D-glucose 1-phosphate + ATP + H(+) = ADP-alpha-D-glucose + diphosphate. The protein operates within glycan biosynthesis; glycogen biosynthesis. Involved in the biosynthesis of ADP-glucose, a building block required for the elongation reactions to produce glycogen. Catalyzes the reaction between ATP and alpha-D-glucose 1-phosphate (G1P) to produce pyrophosphate and ADP-Glc. The polypeptide is Glucose-1-phosphate adenylyltransferase (Koribacter versatilis (strain Ellin345)).